The chain runs to 271 residues: Tritrans,polycis-undecaprenyl-diphosphate synthase (geranylgeranyl-diphosphate specific) (271 aa).

Asp-50 is an active-site residue. Asp-50 is a binding site for Mg(2+). Substrate is bound by residues 51-54 (GNRR), Phe-55, His-67, and 95-97 (STE). The active-site Proton acceptor is Asn-98. Residues Arg-101, Arg-220, and 226–228 (RLS) each bind substrate. Glu-239 is a Mg(2+) binding site.

This sequence belongs to the UPP synthase family. In terms of assembly, homodimer. It depends on Mg(2+) as a cofactor.

The catalysed reaction is geranylgeranyl diphosphate + 7 isopentenyl diphosphate = tri-trans,hepta-cis-undecaprenyl diphosphate + 7 diphosphate. Functionally, catalyzes the sequential condensation of isopentenyl diphosphate (IPP) with geranylgeranyl diphosphate (GGPP) to yield (2Z,6Z,10Z,14Z,18Z,22Z,26Z,30E,34E,38E)-undecaprenyl diphosphate (tritrans,heptacis-UPP). It is probably the precursor of glycosyl carrier lipids. This is Tritrans,polycis-undecaprenyl-diphosphate synthase (geranylgeranyl-diphosphate specific) from Methanopyrus kandleri (strain AV19 / DSM 6324 / JCM 9639 / NBRC 100938).